The primary structure comprises 704 residues: Polyribonucleotide nucleotidyltransferase (704 aa).

Mg(2+)-binding residues include D485 and D491. Residues P552–I611 enclose the KH domain. One can recognise an S1 motif domain in the interval G621–R689.

It belongs to the polyribonucleotide nucleotidyltransferase family. Component of the RNA degradosome, which is a multiprotein complex involved in RNA processing and mRNA degradation. It depends on Mg(2+) as a cofactor.

The protein localises to the cytoplasm. The catalysed reaction is RNA(n+1) + phosphate = RNA(n) + a ribonucleoside 5'-diphosphate. In terms of biological role, involved in mRNA degradation. Catalyzes the phosphorolysis of single-stranded polyribonucleotides processively in the 3'- to 5'-direction. The polypeptide is Polyribonucleotide nucleotidyltransferase (Mannheimia succiniciproducens (strain KCTC 0769BP / MBEL55E)).